The following is a 431-amino-acid chain: UDP-N-acetylmuramate--L-alanine ligase (431 aa).

108–114 (GAHGKST) contributes to the ATP binding site.

Belongs to the MurCDEF family.

The protein resides in the cytoplasm. The catalysed reaction is UDP-N-acetyl-alpha-D-muramate + L-alanine + ATP = UDP-N-acetyl-alpha-D-muramoyl-L-alanine + ADP + phosphate + H(+). Its pathway is cell wall biogenesis; peptidoglycan biosynthesis. In terms of biological role, cell wall formation. The sequence is that of UDP-N-acetylmuramate--L-alanine ligase from Campylobacter jejuni subsp. jejuni serotype O:23/36 (strain 81-176).